The following is a 117-amino-acid chain: Hydrogenase maturation factor HypA (117 aa).

H2 is a binding site for Ni(2+). C73, C76, C89, and C92 together coordinate Zn(2+).

The protein belongs to the HypA/HybF family.

Its function is as follows. Involved in the maturation of [NiFe] hydrogenases. Required for nickel insertion into the metal center of the hydrogenase. The polypeptide is Hydrogenase maturation factor HypA (Shewanella baltica (strain OS185)).